Consider the following 370-residue polypeptide: Ganglioside-induced differentiation-associated protein 1-like 1 (370 aa).

The 85-residue stretch at 45–129 (ESLVLYHWTQ…YVERTFTGEH (85 aa)) folds into the GST N-terminal domain. A GST C-terminal domain is found at 177–344 (PKYATAEIRR…RLVKRKPPSF (168 aa)).

The protein belongs to the GST superfamily.

This chain is Ganglioside-induced differentiation-associated protein 1-like 1 (Gdap1l1), found in Mus musculus (Mouse).